Consider the following 242-residue polypeptide: MSNLDFCTIYTTTGQIDQLSYAQKAADSGDTCIGMKSKHGVVLLAEKPRVSPLYILESDEKIRKIGNTIGVVCTGMSSDTFYVGCAIKDYVFHHKENFNEDPTPGMMKVYLNDIFHYFTRGINLRVLGANTLTSVYKDGSFSLLHTDCSGKTLSYKAACIGKGTRRIKTELEKLDIDTMTIEEMVDVGVKVLYMAHDPSKDKEFDIEIGIASMETGGDLRKLENHEIRPLVGKYKHISVDED.

Belongs to the peptidase T1A family. The 26S proteasome consists of a 20S proteasome core and two 19S regulatory subunits. The 20S proteasome core is composed of 28 subunits that are arranged in four stacked rings, resulting in a barrel-shaped structure. The two end rings are each formed by seven alpha subunits, and the two central rings are each formed by seven beta subunits. The catalytic chamber with the active sites is on the inside of the barrel.

It is found in the cytoplasm. It localises to the nucleus. The proteasome degrades poly-ubiquitinated proteins in the cytoplasm and in the nucleus. It is essential for the regulated turnover of proteins and for the removal of misfolded proteins. The proteasome is a multicatalytic proteinase complex that is characterized by its ability to cleave peptides with Arg, Phe, Tyr, Leu, and Glu adjacent to the leaving group at neutral or slightly basic pH. It has an ATP-dependent proteolytic activity. The sequence is that of Probable proteasome subunit alpha type-7 (PRE10) from Encephalitozoon cuniculi (strain GB-M1) (Microsporidian parasite).